The following is a 346-amino-acid chain: Dehydrogenase orf1 (346 aa).

43–48 serves as a coordination point for NADP(+); sequence VDYATQ. 133–140 serves as a coordination point for substrate; that stretch reads LAFSTAIV. NADP(+)-binding positions include 170–173, 193–196, tyrosine 211, and 251–252; these read ATSV, SPHN, and LN. 269 to 273 provides a ligand contact to substrate; that stretch reads APPNV. Position 336 to 337 (336 to 337) interacts with NADP(+); that stretch reads VS.

This sequence belongs to the zinc-containing alcohol dehydrogenase family.

The protein operates within secondary metabolite biosynthesis. Dehydrogenase; part of the gene cluster that mediates the biosynthesis of nigerpyrone and its derivatives carbonarone A and pestalamide A. The biosynthesis pathway begins with the polyketide assembly by epaA to form phenylacetyl triketide precursor from successive condensation of two malonyl-CoA, presumably with one phenylacetyl-CoA starter unit produced by the phenylacetyl-CoA ligase epaB. For the nigerpyrone biosynthesis, the reactive polyketide chain is released as an aldehyde through the R-domain. A nonenzymatic cyclization and dehydration may create nigerpyrone. For the biosynthesis of carbonarone A and pestalamide A, an extra methyl group is added through the C-methyltransferase domain. Several further steps involving the dehydrogenase orf1, the cytochrome P450 monooxygenase orf2 and the FAD-dependent monooxygenase orf3 are required to form a carbonarone A precursor which is converted to carbonarone A via cyclization. The O-acetyltransferase epaC could catalyze the transfer of 2-methylsuccinyl-CoA, a common intermediate in the ethylmalonyl-CoA pathway, to generate the final product pestalamide A. The sequence is that of Dehydrogenase orf1 from Aspergillus niger (strain ATCC MYA-4892 / CBS 513.88 / FGSC A1513).